The sequence spans 441 residues: UDP-N-acetylglucosamine--peptide N-acetylglucosaminyltransferase stabilizing protein GtfB (441 aa).

Belongs to the GtfB family. As to quaternary structure, forms a heterotetramer with 2 subunits each of GtfA and GtfB. Part of the accessory SecA2/SecY2 protein translocation apparatus.

The protein localises to the cell membrane. Its pathway is protein modification; protein glycosylation. Functionally, required for polymorphic O-glycosylation of the serine-rich repeat protein (SRRP) in this bacteria. A stabilizing protein that is part of the accessory SecA2/SecY2 system specifically required to export serine-rich repeat cell wall proteins encoded in the same operon. The GtfA-GtfB complex adds GlcNAc from UDP-GlcNAc to the substrate protein, attaching the first sugar residue. Stabilizes the glycosylation activity of GtfA. Has no N-acetylglucosaminyl transferase activity on its own. The polypeptide is UDP-N-acetylglucosamine--peptide N-acetylglucosaminyltransferase stabilizing protein GtfB (Limosilactobacillus reuteri subsp. suis (strain ATCC 53608 / LMG 31752 / 1063) (Lactobacillus reuteri)).